Reading from the N-terminus, the 124-residue chain is MEYEFRRNSLTGTFLATFSMDHEVLGQWFSEELGPELAKIQQVLDSVTEILAGKRESWQLIGSDLTLEIDREQARVYANVLGFDEEYELEDAMSLYDAESEAYCGLEDFEQALLSWQEFVQKGI.

This sequence belongs to the UPF0231 family.

This Shewanella putrefaciens (strain CN-32 / ATCC BAA-453) protein is UPF0231 protein Sputcn32_0682.